The primary structure comprises 520 residues: GMP synthase [glutamine-hydrolyzing] (520 aa).

The region spanning 12-205 (KIIVLDYGSQ…AISICGARGD (194 aa)) is the Glutamine amidotransferase type-1 domain. The Nucleophile role is filled by cysteine 89. Catalysis depends on residues histidine 179 and glutamate 181. The region spanning 206 to 395 (WSMDNFIDME…LGMPEEIVWR (190 aa)) is the GMPS ATP-PPase domain. 233–239 (SGGVDSS) is a binding site for ATP.

In terms of assembly, homodimer.

The catalysed reaction is XMP + L-glutamine + ATP + H2O = GMP + L-glutamate + AMP + diphosphate + 2 H(+). The protein operates within purine metabolism; GMP biosynthesis; GMP from XMP (L-Gln route): step 1/1. Functionally, catalyzes the synthesis of GMP from XMP. This is GMP synthase [glutamine-hydrolyzing] from Streptococcus pyogenes serotype M5 (strain Manfredo).